Consider the following 561-residue polypeptide: Transmembrane protein 151B (561 aa).

Low complexity predominate over residues methionine 1–glutamate 10. Positions methionine 1–proline 42 are disordered. The segment covering serine 11–glycine 22 has biased composition (gly residues). 2 helical membrane-spanning segments follow: residues cysteine 59–threonine 79 and tyrosine 106–tryptophan 126. Residues valine 489–methionine 507 are compositionally biased toward polar residues. A disordered region spans residues valine 489–proline 523. Residues asparagine 510–alanine 519 show a composition bias toward acidic residues.

It belongs to the TMEM151 family.

The protein resides in the membrane. The polypeptide is Transmembrane protein 151B (Tmem151b) (Mus musculus (Mouse)).